Reading from the N-terminus, the 134-residue chain is Thyrotropin subunit beta (134 aa).

A signal peptide spans 1-16; it reads MSPFFMMSLLFGLTFG. Intrachain disulfides connect Cys22-Cys72, Cys36-Cys87, Cys39-Cys125, Cys47-Cys103, Cys51-Cys105, and Cys108-Cys115. Asn43 carries N-linked (GlcNAc...) asparagine glycosylation.

This sequence belongs to the glycoprotein hormones subunit beta family. Heterodimer of a common alpha chain and a unique beta chain which confers biological specificity to thyrotropin, lutropin, follitropin and gonadotropin.

It localises to the secreted. Indispensable for the control of thyroid structure and metabolism. In Gallus gallus (Chicken), this protein is Thyrotropin subunit beta (TSHB).